The primary structure comprises 140 residues: Small ribosomal subunit protein uS9A (140 aa).

This sequence belongs to the universal ribosomal protein uS9 family. As to quaternary structure, component of the small ribosomal subunit (SSU). Mature yeast ribosomes consist of a small (40S) and a large (60S) subunit. The 40S small subunit contains 1 molecule of ribosomal RNA (18S rRNA) and at least 33 different proteins. The large 60S subunit contains 3 rRNA molecules (25S, 5.8S and 5S rRNA) and at least 46 different proteins.

Its subcellular location is the cytoplasm. Component of the ribosome, a large ribonucleoprotein complex responsible for the synthesis of proteins in the cell. The small ribosomal subunit (SSU) binds messenger RNAs (mRNAs) and translates the encoded message by selecting cognate aminoacyl-transfer RNA (tRNA) molecules. The large subunit (LSU) contains the ribosomal catalytic site termed the peptidyl transferase center (PTC), which catalyzes the formation of peptide bonds, thereby polymerizing the amino acids delivered by tRNAs into a polypeptide chain. The nascent polypeptides leave the ribosome through a tunnel in the LSU and interact with protein factors that function in enzymatic processing, targeting, and the membrane insertion of nascent chains at the exit of the ribosomal tunnel. This Schizosaccharomyces pombe (strain 972 / ATCC 24843) (Fission yeast) protein is Small ribosomal subunit protein uS9A (rps1601).